The sequence spans 251 residues: Small ribosomal subunit protein uS3 (251 aa).

In terms of domain architecture, KH type-2 spans 39-112 (IRKYINEVYA…NIILNVVEVR (74 aa)). The segment at 222–251 (EEKKPAKKFNKKPVAAKPANKEEKSSKEVK) is disordered. Residues 240 to 251 (ANKEEKSSKEVK) are compositionally biased toward basic and acidic residues.

This sequence belongs to the universal ribosomal protein uS3 family. Part of the 30S ribosomal subunit. Forms a tight complex with proteins S10 and S14.

In terms of biological role, binds the lower part of the 30S subunit head. Binds mRNA in the 70S ribosome, positioning it for translation. The polypeptide is Small ribosomal subunit protein uS3 (Anaeroplasma abactoclasticum).